The primary structure comprises 206 residues: Probable metallo-hydrolase MJ0888 (206 aa).

Residues histidine 55, histidine 57, aspartate 59, histidine 60, histidine 130, aspartate 147, and histidine 190 each contribute to the Zn(2+) site.

This sequence belongs to the metallo-beta-lactamase superfamily. The cofactor is Zn(2+).

The sequence is that of Probable metallo-hydrolase MJ0888 from Methanocaldococcus jannaschii (strain ATCC 43067 / DSM 2661 / JAL-1 / JCM 10045 / NBRC 100440) (Methanococcus jannaschii).